The following is a 250-amino-acid chain: MLMRQKGIIIKAVDYGESDKIITILNEHGAKVPLMARRAKKVKTGLQAQTQLFVYGLFIYNKWRGMGTLNSVDVISQHYKLQMDLYVSSYASLAAETIERSMDEGDVAPYNYQLLQFVLEKIESGTSAQLMSVVVMLKCMKRFGFTASFNRCAVSGNDTQADLIGYSFKYDGAISRQEASKDVHAVILSNKTLYLLDVLQKLPIDKMNSLNIHQEIIDEMSDIILMLYREYAGMFFKSQKLINQLKRLEQ.

This sequence belongs to the RecO family.

In terms of biological role, involved in DNA repair and RecF pathway recombination. The chain is DNA repair protein RecO from Staphylococcus aureus (strain MRSA252).